Reading from the N-terminus, the 280-residue chain is MQPALAPHPSAQDHADQVLHDQLLAAQHQHLTHPQQARPQPPAPQPPHMQPNTPARDQNNIDPAISGATMLTGPPQTPTQPDVTGQETPKTYGKRPLSTSKRAAQNRAAQRAFRQRKEAHIRELEGKVKAYESMGEAIKALQAENYQLREYIINLQSRLLDSQGEVPELPGNIDLSQPRSEIPVPPIPNSGTATTTAPPPTAPQQPQPSHAQAPTSNDDMNSLNRIAVAGLGMRKPPTEEANYLGNNFQAQARRVRPDEGQPEASELPKQEQTHGLPLIS.

The interval Met1–Arg102 is disordered. Residues Pro39–Met49 show a composition bias toward pro residues. The span at Thr79–Pro89 shows a compositional bias: polar residues. Positions Pro96–Leu159 constitute a bZIP domain. The basic motif stretch occupies residues Leu97–His120. Positions Leu124 to Leu155 are leucine-zipper. The segment at Leu169–Ser280 is disordered. Over residues Ala197–Pro206 the composition is skewed to pro residues.

The protein belongs to the bZIP family.

The protein resides in the nucleus. Its function is as follows. Putative transcription factor. The polypeptide is Putative transcription factor kapC (kapC) (Aspergillus fumigatus (strain ATCC MYA-4609 / CBS 101355 / FGSC A1100 / Af293) (Neosartorya fumigata)).